The sequence spans 200 residues: Small ribosomal subunit protein mS26 (200 aa).

Residues 1–27 (MLRALNRLAARPETRPPTPLLLPVRGR) constitute a mitochondrion transit peptide. The disordered stretch occupies residues 1 to 44 (MLRALNRLAARPETRPPTPLLLPVRGRKTRHDPPAKSKVGRVQT). An N6-acetyllysine modification is found at Lys-159.

It belongs to the mitochondrion-specific ribosomal protein mS26 family. Component of the mitochondrial ribosome small subunit (28S) which comprises a 12S rRNA and about 30 distinct proteins.

It is found in the mitochondrion. The chain is Small ribosomal subunit protein mS26 (Mrps26) from Mus musculus (Mouse).